A 338-amino-acid polypeptide reads, in one-letter code: Anthranilate phosphoribosyltransferase (338 aa).

5-phospho-alpha-D-ribose 1-diphosphate-binding positions include G81, 84-85, T89, 91-94, 109-117, and S121; these read GD, NIST, and KHGNRSMVS. Anthranilate is bound at residue G81. S93 is a binding site for Mg(2+). N112 lines the anthranilate pocket. R167 is a binding site for anthranilate. Mg(2+) is bound by residues D226 and E227.

The protein belongs to the anthranilate phosphoribosyltransferase family. As to quaternary structure, homodimer. The cofactor is Mg(2+).

It carries out the reaction N-(5-phospho-beta-D-ribosyl)anthranilate + diphosphate = 5-phospho-alpha-D-ribose 1-diphosphate + anthranilate. The protein operates within amino-acid biosynthesis; L-tryptophan biosynthesis; L-tryptophan from chorismate: step 2/5. Catalyzes the transfer of the phosphoribosyl group of 5-phosphorylribose-1-pyrophosphate (PRPP) to anthranilate to yield N-(5'-phosphoribosyl)-anthranilate (PRA). The protein is Anthranilate phosphoribosyltransferase of Acidithiobacillus ferrooxidans (strain ATCC 23270 / DSM 14882 / CIP 104768 / NCIMB 8455) (Ferrobacillus ferrooxidans (strain ATCC 23270)).